The primary structure comprises 299 residues: Phosphatidylcholine-sterol acyltransferase (299 aa).

A glycan (N-linked (GlcNAc...) asparagine) is linked at Asn30. Ser127 acts as the Nucleophile in catalysis. N-linked (GlcNAc...) asparagine glycosylation is present at Asn185. A disulfide bridge connects residues Cys226 and Cys269. Active-site charge relay system residues include Asp258 and His290.

This sequence belongs to the AB hydrolase superfamily. Lipase family.

The protein resides in the secreted. The catalysed reaction is a sterol + a 1,2-diacyl-sn-glycero-3-phosphocholine = a sterol ester + a 1-acyl-sn-glycero-3-phosphocholine. APOA1 is the most potent activator in plasma. Also activated by APOE, APOC1 and APOA4. Central enzyme in the extracellular metabolism of plasma lipoproteins. Synthesized mainly in the liver and secreted into plasma where it converts cholesterol and phosphatidylcholines (lecithins) to cholesteryl esters and lysophosphatidylcholines on the surface of high and low density lipoproteins (HDLs and LDLs). The cholesterol ester is then transported back to the liver. Has a preference for plasma 16:0-18:2 or 18:O-18:2 phosphatidylcholines. Also produced in the brain by primary astrocytes, and esterifies free cholesterol on nascent APOE-containing lipoproteins secreted from glia and influences cerebral spinal fluid (CSF) APOE- and APOA1 levels. Together with APOE and the cholesterol transporter ABCA1, plays a key role in the maturation of glial-derived, nascent lipoproteins. Required for remodeling high-density lipoprotein particles into their spherical forms. The polypeptide is Phosphatidylcholine-sterol acyltransferase (LCAT) (Eliomys quercinus (Garden dormouse)).